Consider the following 267-residue polypeptide: tRNA pseudouridine synthase A (267 aa).

Residue D54 is the Nucleophile of the active site. A substrate-binding site is contributed by Y114.

It belongs to the tRNA pseudouridine synthase TruA family. In terms of assembly, homodimer.

It carries out the reaction uridine(38/39/40) in tRNA = pseudouridine(38/39/40) in tRNA. Functionally, formation of pseudouridine at positions 38, 39 and 40 in the anticodon stem and loop of transfer RNAs. The chain is tRNA pseudouridine synthase A from Tropheryma whipplei (strain TW08/27) (Whipple's bacillus).